The sequence spans 553 residues: Replication factor C large subunit (553 aa).

50 to 57 (GGPGVGKT) contacts ATP. Positions 438-553 (GKRPGKPEAG…SKKQRTLFDF (116 aa)) are disordered. The segment covering 442–451 (GKPEAGEPRE) has biased composition (basic and acidic residues). Positions 503-513 (EAPMAAAMPAA) are enriched in low complexity. A compositionally biased stretch (basic and acidic residues) spans 532 to 553 (EPEKPPAAEDKCSKKQRTLFDF).

Belongs to the activator 1 small subunits family. RfcL subfamily. Heteromultimer composed of small subunits (RfcS) and large subunits (RfcL).

Its function is as follows. Part of the RFC clamp loader complex which loads the PCNA sliding clamp onto DNA. The chain is Replication factor C large subunit from Methanocella arvoryzae (strain DSM 22066 / NBRC 105507 / MRE50).